The sequence spans 630 residues: Pro-interleukin-16 (630 aa).

Disordered regions lie at residues 30 to 268 (ENPG…FPLT) and 316 to 343 (PKEG…ASDT). The segment covering 129–143 (IRASSSSSIKQRISS) has biased composition (low complexity). At serine 220 the chain carries Phosphoserine. A compositionally biased stretch (polar residues) spans 321 to 343 (SPTSSSNEDSAANGSAETSASDT). An interaction with PPP1R12A, PPP1R12B and PPP1R12C region spans residues 404 to 500 (KQLDSIHVTI…IVTRKLTAES (97 aa)). PDZ domains are found at residues 410 to 495 (HVTI…VTRK) and 532 to 617 (TVTL…IRRK).

As to quaternary structure, homotetramer. Pro-interleukin-16 interacts (via PDZ 2 domain) with PPP1R12A, PPP1R12B and PPP1R12C. Pro-interleukin-16 interacts with GRIN2A. Pro-interleukin-16 interacts with GABPB1. Pro-interleukin-16 interacts (via PDZ 3 domain) with HDAC3.

It is found in the secreted. Its subcellular location is the cytoplasm. The protein localises to the nucleus. Functionally, interleukin-16 stimulates a migratory response in CD4+ lymphocytes, monocytes, and eosinophils. Primes CD4+ T-cells for IL-2 and IL-15 responsiveness. Also induces T-lymphocyte expression of interleukin 2 receptor. Ligand for CD4. In terms of biological role, pro-interleukin-16 is involved in cell cycle progression in T-cells. Appears to be involved in transcriptional regulation of SKP2 and is probably part of a transcriptional repression complex on the core promoter of the SKP2 gene. May act as a scaffold for GABPB1 (the DNA-binding subunit the GABP transcription factor complex) and HDAC3 thus maintaining transcriptional repression and blocking cell cycle progression in resting T-cells. The polypeptide is Pro-interleukin-16 (IL16) (Macaca mulatta (Rhesus macaque)).